The primary structure comprises 462 residues: uncharacterized protein (462 aa).

Helical transmembrane passes span 381 to 401 and 433 to 453; these read WILG…FKGM and LWIL…NLYI.

Its subcellular location is the cell membrane. This is an uncharacterized protein from Methanocaldococcus jannaschii (strain ATCC 43067 / DSM 2661 / JAL-1 / JCM 10045 / NBRC 100440) (Methanococcus jannaschii).